Consider the following 605-residue polypeptide: Class II receptor tyrosine kinase (605 aa).

Residues 1 to 67 (MWSSPGRNLE…DGESASFRVD (67 aa)) enclose the Ig-like C2-type domain. Residues 1 to 84 (MWSSPGRNLE…GSNSGVIAGV (84 aa)) are Extracellular-facing. 3 N-linked (GlcNAc...) asparagine glycosylation sites follow: N26, N44, and N72. The helical transmembrane segment at 85–105 (LITLLLLIALIIILICVFWVV) threads the bilayer. Residues 106 to 605 (WRYRRRGKFD…GRPRGVAGCV (500 aa)) lie on the Cytoplasmic side of the membrane. Positions 209-230 (EELSPIQEKPTRRNTGLSTYSQ) are disordered. Polar residues predominate over residues 221 to 230 (RNTGLSTYSQ). In terms of domain architecture, Protein kinase spans 346–605 (IREVKQIGVG…GRPRGVAGCV (260 aa)). ATP contacts are provided by residues 352–360 (IGVGQFGAV) and K393. Catalysis depends on D496, which acts as the Proton acceptor. Position 527 is a phosphotyrosine; by autocatalysis (Y527).

Belongs to the protein kinase superfamily. Tyr protein kinase family. Insulin receptor subfamily. In terms of processing, phosphorylated.

The protein localises to the cell membrane. It carries out the reaction L-tyrosyl-[protein] + ATP = O-phospho-L-tyrosyl-[protein] + ADP + H(+). This Geodia cydonium (Sponge) protein is Class II receptor tyrosine kinase (TK).